A 141-amino-acid polypeptide reads, in one-letter code: Hemoglobin subunit alpha (141 aa).

The Globin domain occupies 1–141 (VLSGDDKSNL…VSTVLTSKYR (141 aa)). Serine 3 is modified (phosphoserine). 2 positions are modified to N6-succinyllysine: lysine 7 and lysine 11. Lysine 16 is subject to N6-acetyllysine; alternate. Residue lysine 16 is modified to N6-succinyllysine; alternate. Tyrosine 24 is subject to Phosphotyrosine. Lysine 40 is subject to N6-succinyllysine. Phosphoserine is present on serine 49. Histidine 58 lines the O2 pocket. Histidine 87 is a heme b binding site. Position 102 is a phosphoserine (serine 102). Threonine 108 carries the post-translational modification Phosphothreonine. A phosphoserine mark is found at serine 124 and serine 131. 2 positions are modified to phosphothreonine: threonine 134 and threonine 137. Residue serine 138 is modified to Phosphoserine.

The protein belongs to the globin family. Heterotetramer of two alpha chains and two beta chains. In terms of tissue distribution, red blood cells.

Functionally, involved in oxygen transport from the lung to the various peripheral tissues. The polypeptide is Hemoglobin subunit alpha (Microtus pennsylvanicus (Meadow vole)).